Reading from the N-terminus, the 506-residue chain is Deoxyribodipyrimidine photo-lyase (506 aa).

Residues 1 to 21 (MPPTSVSPPRTAPGPANPSPA) show a composition bias toward pro residues. Positions 1–33 (MPPTSVSPPRTAPGPANPSPAHPSRVRVIHPGG) are disordered. The Photolyase/cryptochrome alpha/beta domain occupies 38 to 171 (GPVVYWMLRD…AVHQVDAHNV (134 aa)). Residues Tyr268 and 282 to 285 (SGLS) contribute to the FAD site. The residue at position 312 (Ser312) is a Phosphoserine. Residues 319–327 (ELVVRRELA), Lys390, Asn421, Asp427, and 427–429 (DGR) each bind FAD. The disordered stretch occupies residues 487–506 (KKRNAEESPNPVVKLSKSQH).

Belongs to the DNA photolyase class-2 family. The cofactor is FAD. Expressed in proliferating tissues. Highly expressed in roots and shoot apical meristem (SAM). Expressed in leaves, flag leaves, and panicle.

The protein localises to the nucleus. It catalyses the reaction cyclobutadipyrimidine (in DNA) = 2 pyrimidine residues (in DNA).. Involved in repair of UV radiation-induced DNA damage. Catalyzes the light-dependent monomerization (300-600 nm) of cyclobutylpyrimidine dimers (CPDs), which are formed between adjacent bases on the same DNA strand upon exposure to ultraviolet radiation. Required for plant survival in the presence of UV-B light. Not involved in the repair of (6-4) photoproducts. In Oryza sativa subsp. japonica (Rice), this protein is Deoxyribodipyrimidine photo-lyase (PHR).